We begin with the raw amino-acid sequence, 218 residues long: Response regulator UvrY (218 aa).

The Response regulatory domain maps to 3 to 119 (NVLLVDDHEL…EVVSAIRSVY (117 aa)). Asp-54 is subject to 4-aspartylphosphate. The 66-residue stretch at 143–208 (TESPFASLSE…ELTHLAIRHG (66 aa)) folds into the HTH luxR-type domain. A DNA-binding region (H-T-H motif) is located at residues 167-186 (VNEISEQLNLSPKTVNSYRY).

In terms of processing, phosphorylated and activated by BarA.

Its subcellular location is the cytoplasm. Member of the two-component regulatory system UvrY/BarA involved in the regulation of carbon metabolism via the CsrA/CsrB regulatory system. UvrY activates the transcription of the untranslated csrB RNA and of barA, in an autoregulatory loop. Mediates the effects of CsrA on csrB RNA by BarA-dependent and BarA-independent mechanisms. The chain is Response regulator UvrY (uvrY) from Escherichia coli O157:H7.